The chain runs to 448 residues: MSDNVPTIAAVATAPGRGGVGVIRISGKNLLPMAQALCGKTPKPRVATYADFTDEDGQAIDSGLLLFFAAPASFTGEDVIELQGHGGPVVMDMLLNRCLELGARLAEPGEFTKRAFLNDKLDLAQAEGVADLIDASSRSAARLALRSLKGDFSRRIHGLVEDLITLRMLVEATLDFPEEDIDFLEAADARGKLDGLRRAVDDVLANAQQGAILREGLNVVLVGAPNVGKSSLLNALAGDEVAIVTDIAGTTRDAVRERILIDGVPVHIVDTAGLRETDDVVERIGIERSRKAVSEADVALVLVDPREGLNEKTRAILDALPLELKRIEIHSKSDLHAHAAGGFGTGAETVIALSAKTGDGLDALKRTLLREAGWQGESEGLFLARTRHVNALKAAQEELSLAALCGNHQIELFAEHLRLAQVACGEITGEFTADDLLGVIFSRFCIGK.

(6S)-5-formyl-5,6,7,8-tetrahydrofolate contacts are provided by Arg-24, Glu-81, and Lys-120. In terms of domain architecture, TrmE-type G spans 216-373 (GLNVVLVGAP…LKRTLLREAG (158 aa)). Asn-226 contacts K(+). GTP contacts are provided by residues 226 to 231 (NVGKSS), 245 to 251 (TDIAGTT), and 270 to 273 (DTAG). Position 230 (Ser-230) interacts with Mg(2+). Residues Thr-245, Ile-247, and Thr-250 each coordinate K(+). Thr-251 is a binding site for Mg(2+). Position 448 (Lys-448) interacts with (6S)-5-formyl-5,6,7,8-tetrahydrofolate.

Belongs to the TRAFAC class TrmE-Era-EngA-EngB-Septin-like GTPase superfamily. TrmE GTPase family. Homodimer. Heterotetramer of two MnmE and two MnmG subunits. K(+) is required as a cofactor.

It localises to the cytoplasm. Exhibits a very high intrinsic GTPase hydrolysis rate. Involved in the addition of a carboxymethylaminomethyl (cmnm) group at the wobble position (U34) of certain tRNAs, forming tRNA-cmnm(5)s(2)U34. The sequence is that of tRNA modification GTPase MnmE from Neisseria meningitidis serogroup A / serotype 4A (strain DSM 15465 / Z2491).